We begin with the raw amino-acid sequence, 541 residues long: Chaperonin GroEL (541 aa).

ATP-binding positions include 29–32 (TLGP), 86–90 (DGTTT), glycine 413, 477–479 (DAL), and aspartate 493.

It belongs to the chaperonin (HSP60) family. Forms a cylinder of 14 subunits composed of two heptameric rings stacked back-to-back. Interacts with the co-chaperonin GroES.

The protein localises to the cytoplasm. It catalyses the reaction ATP + H2O + a folded polypeptide = ADP + phosphate + an unfolded polypeptide.. Its function is as follows. Together with its co-chaperonin GroES, plays an essential role in assisting protein folding. The GroEL-GroES system forms a nano-cage that allows encapsulation of the non-native substrate proteins and provides a physical environment optimized to promote and accelerate protein folding. The polypeptide is Chaperonin GroEL (Clostridium botulinum (strain Loch Maree / Type A3)).